Reading from the N-terminus, the 321-residue chain is GDP-L-fucose synthase (321 aa).

NADP(+) is bound at residue 14 to 20 (GGSGLVG). Tyrosine 143 serves as the catalytic Proton donor/acceptor. Residues lysine 147, 170-173 (PTNV), and histidine 186 each bind NADP(+). Residues lysine 194, tryptophan 208, arginine 215, and aspartate 277 each coordinate substrate.

Belongs to the NAD(P)-dependent epimerase/dehydratase family. Fucose synthase subfamily. As to quaternary structure, homodimer.

It carries out the reaction GDP-beta-L-fucose + NADP(+) = GDP-4-dehydro-alpha-D-rhamnose + NADPH + H(+). It functions in the pathway nucleotide-sugar biosynthesis; GDP-L-fucose biosynthesis via de novo pathway; GDP-L-fucose from GDP-alpha-D-mannose: step 2/2. Its function is as follows. Catalyzes the two-step NADP-dependent conversion of GDP-4-dehydro-6-deoxy-D-mannose to GDP-fucose, involving an epimerase and a reductase reaction. This is GDP-L-fucose synthase (GFUS) from Pongo abelii (Sumatran orangutan).